The chain runs to 733 residues: Polyribonucleotide nucleotidyltransferase (733 aa).

The disordered stretch occupies residues 404–424 (NYNMPPYSTGETGRVGSPKRR). 2 residues coordinate Mg(2+): Asp-516 and Asp-522. The region spanning 582–641 (PRIITVHIPVDKIGEVIGPKGKMINQIQDDTGANISIEDDGTIFIGADNGDSAESARSMI) is the KH domain. Residues 653–725 (GERYLGTVVK…DRGKLSLVLA (73 aa)) enclose the S1 motif domain.

The protein belongs to the polyribonucleotide nucleotidyltransferase family. The cofactor is Mg(2+).

The protein localises to the cytoplasm. The enzyme catalyses RNA(n+1) + phosphate = RNA(n) + a ribonucleoside 5'-diphosphate. In terms of biological role, involved in mRNA degradation. Catalyzes the phosphorolysis of single-stranded polyribonucleotides processively in the 3'- to 5'-direction. In Cutibacterium acnes (strain DSM 16379 / KPA171202) (Propionibacterium acnes), this protein is Polyribonucleotide nucleotidyltransferase.